A 268-amino-acid polypeptide reads, in one-letter code: Tryptophan synthase alpha chain (268 aa).

Residues E49 and D60 each act as proton acceptor in the active site.

Belongs to the TrpA family. Tetramer of two alpha and two beta chains.

It catalyses the reaction (1S,2R)-1-C-(indol-3-yl)glycerol 3-phosphate + L-serine = D-glyceraldehyde 3-phosphate + L-tryptophan + H2O. Its pathway is amino-acid biosynthesis; L-tryptophan biosynthesis; L-tryptophan from chorismate: step 5/5. In terms of biological role, the alpha subunit is responsible for the aldol cleavage of indoleglycerol phosphate to indole and glyceraldehyde 3-phosphate. The sequence is that of Tryptophan synthase alpha chain from Erwinia tasmaniensis (strain DSM 17950 / CFBP 7177 / CIP 109463 / NCPPB 4357 / Et1/99).